Consider the following 336-residue polypeptide: Torsin-1B (336 aa).

The first 24 residues, 1 to 24 (MRRIGAFGGSTALWALLAAHVAGA), serve as a signal peptide directing secretion. Residue asparagine 64 is glycosylated (N-linked (GlcNAc...) asparagine). ATP is bound at residue 109–116 (GWAGTGKN). Asparagine 165 carries an N-linked (GlcNAc...) asparagine glycan.

Belongs to the ClpA/ClpB family. Torsin subfamily. As to quaternary structure, homohexamer. Interacts with TOR1A; the interaction may be specific of neural tissues. Interacts with TOR1AIP1; TOR1AIP1 is required for TOR1B location on the nuclear membrane. Interacts (ATP-bound) with TOR1AIP2; important for endoplasmic reticulum integrity. Post-translationally, N-glycosylated. As to expression, highly expressed in liver and muscle; lower expression levels are observed in brain (at protein level).

It is found in the endoplasmic reticulum lumen. The protein resides in the nucleus membrane. The catalysed reaction is ATP + H2O = ADP + phosphate + H(+). May serve as a molecular chaperone assisting in the proper folding of secreted and/or membrane proteins. Plays a role in non-neural cells nuclear envelope and endoplasmic reticulum integrity. May have a redundant function with TOR1A in non-neural tissues. This is Torsin-1B (Tor1b) from Mus musculus (Mouse).